Consider the following 629-residue polypeptide: tRNA uridine 5-carboxymethylaminomethyl modification enzyme MnmG (629 aa).

13–18 (GGGHAG) contributes to the FAD binding site. An NAD(+)-binding site is contributed by 273–287 (GPRYCPSIEDKIHRF).

This sequence belongs to the MnmG family. In terms of assembly, homodimer. Heterotetramer of two MnmE and two MnmG subunits. Requires FAD as cofactor.

It localises to the cytoplasm. Functionally, NAD-binding protein involved in the addition of a carboxymethylaminomethyl (cmnm) group at the wobble position (U34) of certain tRNAs, forming tRNA-cmnm(5)s(2)U34. The polypeptide is tRNA uridine 5-carboxymethylaminomethyl modification enzyme MnmG (Shewanella amazonensis (strain ATCC BAA-1098 / SB2B)).